The chain runs to 83 residues: Small ribosomal subunit protein bS16 (83 aa).

Belongs to the bacterial ribosomal protein bS16 family.

The protein is Small ribosomal subunit protein bS16 of Pseudomonas fluorescens (strain ATCC BAA-477 / NRRL B-23932 / Pf-5).